A 574-amino-acid chain; its full sequence is Urease subunit alpha (574 aa).

Residues 131–574 enclose the Urease domain; the sequence is GAIDSHIHFI…LPMAQRYLLI (444 aa). 3 residues coordinate Ni(2+): histidine 136, histidine 138, and lysine 219. At lysine 219 the chain carries N6-carboxylysine. Histidine 221 provides a ligand contact to substrate. Residues histidine 248 and histidine 274 each contribute to the Ni(2+) site. Histidine 322 serves as the catalytic Proton donor. Position 362 (aspartate 362) interacts with Ni(2+).

It belongs to the metallo-dependent hydrolases superfamily. Urease alpha subunit family. Heterotrimer of UreA (gamma), UreB (beta) and UreC (alpha) subunits. Three heterotrimers associate to form the active enzyme. Requires Ni cation as cofactor. Carboxylation allows a single lysine to coordinate two nickel ions.

Its subcellular location is the cytoplasm. It carries out the reaction urea + 2 H2O + H(+) = hydrogencarbonate + 2 NH4(+). The protein operates within nitrogen metabolism; urea degradation; CO(2) and NH(3) from urea (urease route): step 1/1. The sequence is that of Urease subunit alpha from Prochlorococcus marinus (strain MIT 9303).